Reading from the N-terminus, the 89-residue chain is Small ribosomal subunit protein uS15 (89 aa).

Belongs to the universal ribosomal protein uS15 family. In terms of assembly, part of the 30S ribosomal subunit. Forms a bridge to the 50S subunit in the 70S ribosome, contacting the 23S rRNA.

Functionally, one of the primary rRNA binding proteins, it binds directly to 16S rRNA where it helps nucleate assembly of the platform of the 30S subunit by binding and bridging several RNA helices of the 16S rRNA. Its function is as follows. Forms an intersubunit bridge (bridge B4) with the 23S rRNA of the 50S subunit in the ribosome. The sequence is that of Small ribosomal subunit protein uS15 from Nostoc punctiforme (strain ATCC 29133 / PCC 73102).